The sequence spans 185 residues: Elongation factor P (185 aa).

Belongs to the elongation factor P family.

The protein localises to the cytoplasm. Its pathway is protein biosynthesis; polypeptide chain elongation. In terms of biological role, involved in peptide bond synthesis. Stimulates efficient translation and peptide-bond synthesis on native or reconstituted 70S ribosomes in vitro. Probably functions indirectly by altering the affinity of the ribosome for aminoacyl-tRNA, thus increasing their reactivity as acceptors for peptidyl transferase. This is Elongation factor P from Oceanobacillus iheyensis (strain DSM 14371 / CIP 107618 / JCM 11309 / KCTC 3954 / HTE831).